A 379-amino-acid chain; its full sequence is Cell division protein FtsZ (379 aa).

GTP-binding positions include 18–22 (GGGVN), 105–107 (GTG), Glu136, Arg140, and Asp184.

Belongs to the FtsZ family. As to quaternary structure, homodimer. Polymerizes to form a dynamic ring structure in a strictly GTP-dependent manner. Interacts directly with several other division proteins.

The protein resides in the cytoplasm. Functionally, essential cell division protein that forms a contractile ring structure (Z ring) at the future cell division site. The regulation of the ring assembly controls the timing and the location of cell division. One of the functions of the FtsZ ring is to recruit other cell division proteins to the septum to produce a new cell wall between the dividing cells. Binds GTP and shows GTPase activity. This chain is Cell division protein FtsZ, found in Mycobacterium bovis (strain ATCC BAA-935 / AF2122/97).